The sequence spans 490 residues: Capsid protein (490 aa).

The interval 79-143 (GETSEEESDS…TQPKTIPGQK (65 aa)) is disordered. Positions 81-94 (TSEEESDSGEEPEF) are enriched in acidic residues. Over residues 95–111 (EQVRMDRTGGTEIPKEE) the composition is skewed to basic and acidic residues. Residues 122–125 (RKRK) carry the Nuclear localization signal motif. The CCHC-type zinc-finger motif lies at 411 to 428 (CRCWICNIEGHYANECPN). Residues 464–490 (YKEEEEETSTEEDDGSSTSEDSDSESD) are disordered. Residues 465–490 (KEEEEETSTEEDDGSSTSEDSDSESD) are compositionally biased toward acidic residues.

It belongs to the caulimoviridae capsid protein family. Interacts (via nuclear localization signal) with host importin alpha.

Its subcellular location is the virion. It is found in the host nucleus. In terms of biological role, self assembles to form an icosahedral capsid, about 50 nm in diameter, nm, composed of 420 subunits of the viral capsid protein. The capsid encapsulates the genomic dsDNA. Following virus entry into host cell, provides nuclear import of the viral genome. Virus particles do not enter the nucleus, but dock at the nuclear membrane through the interaction with host importins. This is Capsid protein from Arabidopsis thaliana (Mouse-ear cress).